Here is a 327-residue protein sequence, read N- to C-terminus: Inactive peptidyl-prolyl cis-trans isomerase FKBP6 (327 aa).

A disordered region spans residues 1 to 20 (MSVFSRLRNGIPPSRDDCQS). Positions 54–143 (DASVLVKYSG…LFEIELIDFL (90 aa)) constitute a PPIase FKBP-type domain. 3 TPR repeats span residues 171–204 (AATEREFGNYLFRQNRFCDAKVRYKRALLLLHRR), 219–252 (LLVLLNLSFVYLKLDRPAMALRYGEQALLIDKRN), and 253–286 (AKALFRCGQACLLLTEYEQARDFLVRAQKEQPCN).

The protein belongs to the FKBP6 family. Interacts with HSP72/HSPA2 and CLTC. Interacts with GAPDH; leading to inhibit GAPDH catalytic activity. Interacts (via TPR repeats) with HSP90.

It localises to the cytoplasm. It is found in the cytosol. Its subcellular location is the nucleus. The protein localises to the chromosome. Its function is as follows. Co-chaperone required during spermatogenesis to repress transposable elements and prevent their mobilization, which is essential for the germline integrity. Acts via the piRNA metabolic process, which mediates the repression of transposable elements during meiosis by forming complexes composed of piRNAs and Piwi proteins and govern the methylation and subsequent repression of transposons. Acts as a co-chaperone via its interaction with HSP90 and is required for the piRNA amplification process, the secondary piRNA biogenesis. May be required together with HSP90 in removal of 16 nucleotide ping-pong by-products from Piwi complexes, possibly facilitating turnover of Piwi complexes. The sequence is that of Inactive peptidyl-prolyl cis-trans isomerase FKBP6 (Fkbp6) from Rattus norvegicus (Rat).